The primary structure comprises 115 residues: Evasin P1181 (115 aa).

Positions 1-25 are cleaved as a signal peptide; the sequence is MALNWSFRVIFVSAMWCALLKFATL. Disulfide bonds link C38/C58, C54/C94, C70/C99, and C89/C108. Residues N45, N72, and N103 are each glycosylated (N-linked (GlcNAc...) asparagine).

The protein resides in the secreted. Salivary chemokine-binding protein which binds to host chemokines CCL3 and CCL4. The polypeptide is Evasin P1181 (Amblyomma maculatum (Gulf Coast tick)).